The following is a 178-amino-acid chain: Large ribosomal subunit protein uL30 (178 aa).

It belongs to the universal ribosomal protein uL30 family. In terms of assembly, part of the 50S ribosomal subunit.

This is Large ribosomal subunit protein uL30 from Pyrobaculum aerophilum (strain ATCC 51768 / DSM 7523 / JCM 9630 / CIP 104966 / NBRC 100827 / IM2).